Reading from the N-terminus, the 698-residue chain is MFYGFLLLYPLLSLCLEHVISLSKKGKPTLGFVIMRNAVDIKTLSDVKDRVKNEKRTHCLVVNKYKVNDVLKNKEAKFYFLNVFRFPSVLKLREYEGNLMETGQYNGEVLRFIHSYVERLGGGGTHVGGKADSKADGKVNHDVSDQVVAQQTDQQMDQQMDQQTDQQMDQQMDQKRDAALEDCRLIPLNARFNKALQELMQREGKEIMEGLDMHLEEGDAGNVTVEGVAMEDDSTAHDSVQRNEGKTPKGPLDGQWPPLEELFRIIKKEGIQISIIQLQFGYDNMNTSEILRKIFPTESEVIHKYEMIGHIAHLNFCERFENYKKVIAEIILDKNKSIKTVINKMDTLKNLHRTFNIELLAGEKNYLTTLKENDIKVKLNYELIYWNSKLKKERDRIYDLVENNSIIVDLFAGVGIFSLHLSKKKCLCFSNDINSHAYNFMNVNIKLNKRKSILTYNLDARAFVQMLLGLDIFSSDKTTLSMQLSEQNWKNISLDFINSPDQNNVDTGKRKKRESDRVGHVDDDITANATIDKKKKLRHADTNDPLEERPLGLAATHHGEENIQSVERTNNDSEKTKEDAPRDVTHQVDINLGIYGDIHVLMNLPQTAFEFLDIFRELLDTYSTDQKDFQGKCRRDQMRNVFIHCYFFSKPELFYEDAERNIRMQLGGLPREMKITEIRKVSPSKLMYVAEFNLKDVF.

The interval 233–254 (DSTAHDSVQRNEGKTPKGPLDG) is disordered. Basic and acidic residues predominate over residues 234–247 (STAHDSVQRNEGKT). Residues arginine 394, 432–433 (DI), and 459–460 (DA) each bind S-adenosyl-L-methionine. Disordered stretches follow at residues 500–522 (PDQN…GHVD) and 534–582 (KKKL…DAPR). Composition is skewed to basic and acidic residues over residues 513-522 (RESDRVGHVD), 539-550 (HADTNDPLEERP), and 569-582 (TNND…DAPR). Residue asparagine 603 participates in S-adenosyl-L-methionine binding.

The protein belongs to the class I-like SAM-binding methyltransferase superfamily. TRM5/TYW2 family. As to quaternary structure, monomer.

The protein localises to the mitochondrion matrix. It localises to the nucleus. Its subcellular location is the cytoplasm. It carries out the reaction guanosine(37) in tRNA + S-adenosyl-L-methionine = N(1)-methylguanosine(37) in tRNA + S-adenosyl-L-homocysteine + H(+). In terms of biological role, specifically methylates the N1 position of guanosine-37 in various cytoplasmic and mitochondrial tRNAs. Methylation is not dependent on the nature of the nucleoside 5' of the target nucleoside. This is the first step in the biosynthesis of wybutosine (yW), a modified base adjacent to the anticodon of tRNAs and required for accurate decoding. The polypeptide is tRNA (guanine(37)-N(1))-methyltransferase (Plasmodium knowlesi (strain H)).